A 119-amino-acid chain; its full sequence is Aspartate 1-decarboxylase (119 aa).

The Schiff-base intermediate with substrate; via pyruvic acid role is filled by S25. S25 is modified (pyruvic acid (Ser)). Residue T57 coordinates substrate. Y58 (proton donor) is an active-site residue. 73–75 (GAA) lines the substrate pocket.

Belongs to the PanD family. In terms of assembly, heterooctamer of four alpha and four beta subunits. Requires pyruvate as cofactor. In terms of processing, is synthesized initially as an inactive proenzyme, which is activated by self-cleavage at a specific serine bond to produce a beta-subunit with a hydroxyl group at its C-terminus and an alpha-subunit with a pyruvoyl group at its N-terminus.

Its subcellular location is the cytoplasm. The catalysed reaction is L-aspartate + H(+) = beta-alanine + CO2. Its pathway is cofactor biosynthesis; (R)-pantothenate biosynthesis; beta-alanine from L-aspartate: step 1/1. In terms of biological role, catalyzes the pyruvoyl-dependent decarboxylation of aspartate to produce beta-alanine. This is Aspartate 1-decarboxylase from Herminiimonas arsenicoxydans.